Consider the following 710-residue polypeptide: Polyribonucleotide nucleotidyltransferase (710 aa).

Residues Asp-486 and Asp-492 each coordinate Mg(2+). Positions 553 to 612 (PRFETIKIHPDKIRDIIGKGGATIRSITEETNSSIDIDDDGTVKVYADDNEALQAALNRI) constitute a KH domain. Residues 622 to 690 (GAIYEGTVVR…QRGRIKLSIK (69 aa)) enclose the S1 motif domain.

Belongs to the polyribonucleotide nucleotidyltransferase family. As to quaternary structure, component of the RNA degradosome, which is a multiprotein complex involved in RNA processing and mRNA degradation. It depends on Mg(2+) as a cofactor.

It is found in the cytoplasm. It carries out the reaction RNA(n+1) + phosphate = RNA(n) + a ribonucleoside 5'-diphosphate. Involved in mRNA degradation. Catalyzes the phosphorolysis of single-stranded polyribonucleotides processively in the 3'- to 5'-direction. The polypeptide is Polyribonucleotide nucleotidyltransferase (Cellvibrio japonicus (strain Ueda107) (Pseudomonas fluorescens subsp. cellulosa)).